A 225-amino-acid chain; its full sequence is UPF0758 protein Ping_0056 (225 aa).

Positions A103–I225 constitute an MPN domain. Zn(2+)-binding residues include H174, H176, and D187. The JAMM motif signature appears at H174–D187.

The protein belongs to the UPF0758 family.

This chain is UPF0758 protein Ping_0056, found in Psychromonas ingrahamii (strain DSM 17664 / CCUG 51855 / 37).